The following is a 269-amino-acid chain: GRF-interacting factor 10 (269 aa).

The segment at 1-71 is disordered; it reads MTAEGEAKNP…GEKDDGACRD (71 aa). Positions 22 to 43 are enriched in low complexity; the sequence is QQAAPAPAPAQGEVAQEAAVQG. Positions 47–69 are enriched in basic and acidic residues; that stretch reads EQERDKADREVQGGAGEKDDGAC. In terms of domain architecture, QLQ spans 113 to 148; the sequence is AFTAMQLQELEQQSRVYQYMAARVPVPTHLVFPVWK. In terms of domain architecture, WRC spans 179–223; that stretch reads EPEPGRCRRTDGKKWRCWRNTIPNEKYCERHMHRGRKRPVQVFLE. 2 consecutive short sequence motifs (bipartite nuclear localization signal) follow at residues 184–194 and 212–216; these read RCRRTDGKKWR and RGRKR. The disordered stretch occupies residues 217-269; the sequence is PVQVFLEDDEPDSASGSKPAAPGKATEGAKKADDKSPSSKKLAVAAPAAVQST. The span at 243-253 shows a compositional bias: basic and acidic residues; it reads EGAKKADDKSP.

This sequence belongs to the GRF family. In terms of assembly, interacts with GIF1. As to expression, highly expressed in shoots. Expressed in developing leaves.

Its subcellular location is the nucleus. Functionally, involved in the regulation of cell proliferation in developing shoots and leaves. Does not possess transactivation activity. The polypeptide is GRF-interacting factor 10 (Zea mays (Maize)).